The primary structure comprises 574 residues: Galectin-3-binding protein (574 aa).

An N-terminal signal peptide occupies residues 1–18; it reads MALLWLLSVFLLVPGTQG. In terms of domain architecture, SRCR spans 24 to 124; that stretch reads MRLVNGASAS…HEKDAGVVCS (101 aa). Intrachain disulfides connect cysteine 49-cysteine 113, cysteine 62-cysteine 123, and cysteine 93-cysteine 103. Asparagine 69, asparagine 96, asparagine 102, and asparagine 125 each carry an N-linked (GlcNAc...) asparagine glycan. Residues 153–221 enclose the BTB domain; the sequence is CDLFIQVTGQ…FYSRRIEVSM (69 aa). The region spanning 260 to 360 is the BACK domain; sequence PLELYEYAQA…MLPQELFELQ (101 aa). N-linked (GlcNAc...) asparagine glycans are attached at residues asparagine 362, asparagine 398, asparagine 540, and asparagine 569.

As to quaternary structure, homodimers and homomultimers. The multimers form ring-like structures with a diameter of 30-40 nm. Binds LGALS1 and LGALS3. Binds ITGB1, COL4A1, COL5A1, COL6A1, FN1 and NID. The unglycosylated form interacts with PDE4DIP; this interaction, which is PDE4DIP isoform-specific, may connect a pericentrosomal complex to the gamma-tubulin ring complex (gamma-TuRC) to promote microtubule assembly and acetylation. Detected in thyroid (at protein level).

It is found in the secreted. The protein resides in the extracellular space. The protein localises to the extracellular matrix. In terms of biological role, promotes integrin-mediated cell adhesion. May stimulate host defense against viruses and tumor cells. In Rattus norvegicus (Rat), this protein is Galectin-3-binding protein (Lgals3bp).